Here is a 1278-residue protein sequence, read N- to C-terminus: NPC intracellular cholesterol transporter 1 (1278 aa).

A signal peptide spans 1–22 (MTARGLALGLLLLLLCPAQVFS). The Lumenal segment spans residues 23-261 (QSCVWYGECG…QPPPPPAPWT (239 aa)). 9 disulfide bridges follow: Cys25/Cys74, Cys31/Cys42, Cys63/Cys109, Cys75/Cys113, Cys97/Cys238, Cys100/Cys160, Cys177/Cys184, Cys227/Cys243, and Cys240/Cys247. Residue Asn41 participates in cholesterol binding. N-linked (GlcNAc...) asparagine glycosylation is present at Asn70. Gln79 contacts cholesterol. N-linked (GlcNAc...) asparagine glycosylation is found at Asn122 and Asn135. Asn158 is a glycosylation site (N-linked (GlcNAc...) asparagine; atypical). The interval 175-205 (LLCGKDADACNATNWIEYMFNKDNGQAPFTI) is important for cholesterol binding and cholesterol transfer from NPC1 to liposomes. N-linked (GlcNAc...) asparagine glycosylation is found at Asn185 and Asn222. Residues 262 to 282 (ILGLDAMYVIMWITYMAFLLV) traverse the membrane as a helical segment. Topologically, residues 283–350 (FFGAFFAVWC…RWGSFCVRNP (68 aa)) are cytoplasmic. Residues 351 to 371 (GCVIFFSLVFITACSSGLVFV) form a helical membrane-spanning segment. The Lumenal segment spans residues 372-620 (RVTTNPVDLW…DELNRESDSD (249 aa)). 7 N-linked (GlcNAc...) asparagine glycosylation sites follow: Asn452, Asn459, Asn478, Asn524, Asn557, Asn572, and Asn598. 2 disulfide bridges follow: Cys468–Cys479 and Cys516–Cys533. The SSD domain occupies 620 to 785 (DVFTVVISYA…ITCFVSLLGL (166 aa)). Residues 621–641 (VFTVVISYAIMFLYISLALGH) form a helical membrane-spanning segment. The Cytoplasmic portion of the chain corresponds to 642–653 (MKSCRRLLVDSK). A helical membrane pass occupies residues 654 to 675 (VSLGIAGILIVLSSVACSLGVF). The Lumenal portion of the chain corresponds to 676–685 (SYIGLPLTLI). Residues 686 to 706 (VIEVIPFLVLAVGVDNIFILV) form a helical membrane-spanning segment. The Cytoplasmic segment spans residues 707 to 730 (QAYQRDERLQGETLDQQLGRVLGE). A helical transmembrane segment spans residues 731-751 (VAPSMFLSSFSETVAFFLGAL). At 752 to 759 (SVMPAVHT) the chain is on the lumenal side. Residues 760 to 783 (FSLFAGLAVFIDFLLQITCFVSLL) form a helical membrane-spanning segment. The Cytoplasmic portion of the chain corresponds to 784-832 (GLDIKRQEKNRLDIFCCVRGAEDGTSVQASESCLFRFFKNSYSPLLLKD). Residues 833–853 (WMRPIVIAIFVGVLSFSIAVL) traverse the membrane as a helical segment. The Lumenal portion of the chain corresponds to 854–1097 (NKVDIGLDQS…YEQYLTIIDD (244 aa)). A disulfide bond links Cys909 and Cys914. Residues Asn916, Asn931, Asn961, Asn968, Asn1064, and Asn1072 are each glycosylated (N-linked (GlcNAc...) asparagine). Cystine bridges form between Cys956-Cys1011, Cys957-Cys979, and Cys967-Cys976. A helical transmembrane segment spans residues 1098-1118 (TIFNLGVSLGAIFLVTMVLLG). Residues 1119-1124 (CELWSA) lie on the Cytoplasmic side of the membrane. A helical membrane pass occupies residues 1125–1145 (VIMCATIAMVLVNMFGVMWLW). Over 1146–1150 (GISLN) the chain is Lumenal. A helical membrane pass occupies residues 1151-1171 (AVSLVNLVMSCGISVEFCSHI). The Cytoplasmic portion of the chain corresponds to 1172-1194 (TRAFTVSMKGSRVERAEEALAHM). A helical membrane pass occupies residues 1195–1215 (GSSVFSGITLTKFGGIVVLAF). Over 1216–1223 (AKSQIFQI) the chain is Lumenal. Residues 1224-1244 (FYFRMYLAMVLLGATHGLIFL) form a helical membrane-spanning segment. At 1245-1278 (PVLLSYIGPSVNKAKSCATEERYKGTERERLLNF) the chain is on the cytoplasmic side. Residues 1275-1278 (LLNF) are required for location in lysosomes. Residues 1275-1278 (LLNF) carry the Di-leucine motif motif.

This sequence belongs to the patched family. As to quaternary structure, interacts (via the second lumenal domain) with NPC2. Interacts with TMEM97; the interaction may decrease NPC1 availability to the cell. Interacts with TIM1. Interacts with SLC38A9; this interaction inhibits cholesterol-mediated mTORC1 activation via its sterol transport activity. In terms of assembly, (Microbial infection) Interacts with ebolavirus glycoprotein. N-glycosylated.

Its subcellular location is the late endosome membrane. The protein localises to the lysosome membrane. It carries out the reaction cholesterol(in) = cholesterol(out). Its function is as follows. Intracellular cholesterol transporter which acts in concert with NPC2 and plays an important role in the egress of cholesterol from the endosomal/lysosomal compartment. Unesterified cholesterol that has been released from LDLs in the lumen of the late endosomes/lysosomes is transferred by NPC2 to the cholesterol-binding pocket in the N-terminal domain of NPC1. Cholesterol binds to NPC1 with the hydroxyl group buried in the binding pocket. Binds oxysterol with higher affinity than cholesterol. May play a role in vesicular trafficking in glia, a process that may be crucial for maintaining the structural and functional integrity of nerve terminals. Inhibits cholesterol-mediated mTORC1 activation throught its interaction with SLC38A9. (Microbial infection) Acts as an endosomal entry receptor for ebolavirus. The protein is NPC intracellular cholesterol transporter 1 of Homo sapiens (Human).